The primary structure comprises 361 residues: MRVTVDSEQCVGAGQCVLNAPEVFDQDDDGVVVLLRADPTSGTTRRSARRATCARRPRSSSRRTEPAGCADRHRCPVRPGPRTRGPADPPPANTDRRQNHRRDSPVTTADDTAARWLRRYHPAEADAVRLVCFPHAGGSASFYHPVSARFAPGAEVVSLQYPGRQDRRKEPCVPDLGTLADLITEQLLPLDERPTVFFGHSMGAALAFETAWRLEQKGAGPRTVIASGRRGPSTTRAERVHTRDDDGIVAEMKRLNGTAAGVLGDEEILRMALPALRGDYRAIETYTCPPDRRLACGLTVLTGEDDPLTTVEEAERWRDHTTGPFRLRVFTGGHFFLTQHLDAVNTEIAQALHPDRAAPAA.

Positions 2-29 constitute a 4Fe-4S ferredoxin-type domain; it reads RVTVDSEQCVGAGQCVLNAPEVFDQDDD. A disordered region spans residues 36–110; sequence RADPTSGTTR…RRDSPVTTAD (75 aa). Residues 46–61 show a composition bias toward basic residues; that stretch reads RSARRATCARRPRSSS. Composition is skewed to basic and acidic residues over residues 62–74 and 94–104; these read RRTE…DRHR and TDRRQNHRRDS. Residue Ser201 is part of the active site.

This sequence belongs to the thioesterase family.

Its pathway is antibiotic biosynthesis; candicidin biosynthesis. In terms of biological role, probable thioesterase involved in the biosynthesis of candicidin. Could release the macrolide ring from the polyketide synthase. This Streptomyces griseus protein is Probable cadicidin biosynthesis thioesterase.